A 557-amino-acid chain; its full sequence is T-complex protein 1 subunit theta-like 2 (557 aa).

Disordered stretches follow at residues 1–33 (MDST…EPHL) and 531–557 (EIWN…GLNN).

The protein belongs to the TCP-1 chaperonin family.

It localises to the cytoplasm. In terms of biological role, possible molecular chaperone; assists the folding of proteins upon ATP hydrolysis. In Homo sapiens (Human), this protein is T-complex protein 1 subunit theta-like 2 (CCT8L2).